The primary structure comprises 347 residues: F-box/LRR-repeat/kelch-repeat protein At2g27520 (347 aa).

Residues Met-1–Ala-50 form the F-box domain. LRR repeat units follow at residues Leu-59–Gln-82, Cys-152–Lys-177, Lys-196–Asp-220, and Leu-261–Ile-285. A Kelch 1 repeat occupies Lys-138–Gly-187. A Kelch 2 repeat occupies Met-306–Met-347.

In Arabidopsis thaliana (Mouse-ear cress), this protein is F-box/LRR-repeat/kelch-repeat protein At2g27520.